We begin with the raw amino-acid sequence, 556 residues long: Glucose-6-phosphate isomerase (556 aa).

Glutamate 363 serves as the catalytic Proton donor. Active-site residues include histidine 394 and lysine 522.

This sequence belongs to the GPI family.

It localises to the cytoplasm. It carries out the reaction alpha-D-glucose 6-phosphate = beta-D-fructose 6-phosphate. The protein operates within carbohydrate biosynthesis; gluconeogenesis. It participates in carbohydrate degradation; glycolysis; D-glyceraldehyde 3-phosphate and glycerone phosphate from D-glucose: step 2/4. Its function is as follows. Catalyzes the reversible isomerization of glucose-6-phosphate to fructose-6-phosphate. In Frankia casuarinae (strain DSM 45818 / CECT 9043 / HFP020203 / CcI3), this protein is Glucose-6-phosphate isomerase.